Reading from the N-terminus, the 357-residue chain is Ribosomal RNA large subunit methyltransferase M (357 aa).

Residues S183, 216–219, D235, D255, and D271 each bind S-adenosyl-L-methionine; that span reads APGG. The active-site Proton acceptor is the K300.

Belongs to the class I-like SAM-binding methyltransferase superfamily. RNA methyltransferase RlmE family. RlmM subfamily. Monomer.

It localises to the cytoplasm. It catalyses the reaction cytidine(2498) in 23S rRNA + S-adenosyl-L-methionine = 2'-O-methylcytidine(2498) in 23S rRNA + S-adenosyl-L-homocysteine + H(+). Its function is as follows. Catalyzes the 2'-O-methylation at nucleotide C2498 in 23S rRNA. In Pseudomonas fluorescens (strain Pf0-1), this protein is Ribosomal RNA large subunit methyltransferase M.